A 429-amino-acid chain; its full sequence is MAIIDDARKGIITDEMKKISLIEKISPEKVRKRIVEGKIMLIRNEKYPSKKIVAIGKGLTTKVNINIGTSSEVVNLDMELEKVKIANKWGDTLMDLSTGGDLDLIRREIIKHSELPVGTVPVYQVFIESFKHKSGGAYFTEDDLLNTIEKHLKDGVAFMTIHAGLTKDLAIRALKSNRIIPIVSRGGDMIAGWMIHNNSENPYRKNWDYILEMFKQYDAVISLGDALRPGATGDAHDEFQIGELLETARLVKSALEKGVQVMVEGPGHVPLNEIAWDVKLMKKLTGGVPYYVLGPLPIDVGAPYDHIASAIGAAIASASGADLLCYLTPAEHLSLPTVEQVEEGAIAYRIAAHAGDIVKLGKKVRNWDDVVSYYRGKLEWEKMISSLIDPERAMKVYTQFGKPKVRACTMCGGYCPMMWAMEQVRKISD.

Residues asparagine 66, methionine 94, tyrosine 123, histidine 162, 184–186 (SRG), 225–228 (DALR), and glutamate 264 contribute to the substrate site. Histidine 268 is a Zn(2+) binding site. Tyrosine 291 contributes to the substrate binding site. Histidine 332 is a Zn(2+) binding site. [4Fe-4S] cluster contacts are provided by cysteine 408, cysteine 411, and cysteine 415.

It belongs to the ThiC family. [4Fe-4S] cluster serves as cofactor.

The catalysed reaction is 5-amino-1-(5-phospho-beta-D-ribosyl)imidazole + S-adenosyl-L-methionine = 4-amino-2-methyl-5-(phosphooxymethyl)pyrimidine + CO + 5'-deoxyadenosine + formate + L-methionine + 3 H(+). It participates in cofactor biosynthesis; thiamine diphosphate biosynthesis. Functionally, catalyzes the synthesis of the hydroxymethylpyrimidine phosphate (HMP-P) moiety of thiamine from aminoimidazole ribotide (AIR) in a radical S-adenosyl-L-methionine (SAM)-dependent reaction. The chain is Phosphomethylpyrimidine synthase from Sulfurisphaera tokodaii (strain DSM 16993 / JCM 10545 / NBRC 100140 / 7) (Sulfolobus tokodaii).